The chain runs to 457 residues: Dolichol phosphate-mannose mannosyltransferase (457 aa).

Over 1 to 12 (MKRLAKAAFSQN) the chain is Cytoplasmic. Residues 13–33 (SLTAPIVSTFVYLISVVRVVL) form a helical membrane-spanning segment. The Extracellular portion of the chain corresponds to 34–91 (NGNWPVTSSDTAMFQHIGWMVFSGKRYYIDAWDPKPPLTLELATIIAYISNGDPHLQH). Residues 92-112 (TLSVVSTIVAGILLTYLISHI) form a helical membrane-spanning segment. Over 113–120 (TSEITGNQ) the chain is Cytoplasmic. Residues 121 to 141 (FAGLLSGIVFITFPVIHYSAV) form a helical membrane-spanning segment. The Extracellular portion of the chain corresponds to 142-173 (FGYEPKYFVFLFGLGSIYLSRNPKPILSGAAA). Residues 174–194 (AASAGMWQFAIIFPIISFGII) form a helical membrane-spanning segment. The Cytoplasmic segment spans residues 195–211 (SRRKSKDLILKYVFGAT). Residues 212–232 (IIAFISLLPIYLQGGLVAMTV) traverse the membrane as a helical segment. The Extracellular segment spans residues 233 to 259 (EVIIAPLYAGETQSFLYRLVKGVTHLK). The chain crosses the membrane as a helical span at residues 260 to 280 (LMIPIALLGMAGILLGFLDDI). Over 281 to 283 (RER) the chain is Cytoplasmic. A helical transmembrane segment spans residues 284-304 (WWVVGLLLWFCIQIFILDYDG). Over 305-307 (ADD) the chain is Extracellular. A helical membrane pass occupies residues 308 to 328 (LFLGIILVSMGIGFAFEKLST). The Cytoplasmic portion of the chain corresponds to 329–337 (KYESERINS). The helical transmembrane segment at 338 to 358 (IVTAVVVCMLIWQVVTLGGVG) threads the bilayer. The Extracellular segment spans residues 359 to 457 (VITNPYSYSG…EEKCGKWRLP (99 aa)).

The protein resides in the cell membrane. It functions in the pathway cell surface structure biogenesis; S-layer biogenesis. The protein operates within protein modification; protein glycosylation. Functionally, involved in the assembly of a N-linked pentasaccharide that decorates the S-layer glycoprotein and flagellins. Transfers mannose, the terminal pentasaccharide residue, from its dedicated dolichol phosphate carrier to the protein-bound glycan comprising the first four subunits of the N-linked pentasaccharide. The protein is Dolichol phosphate-mannose mannosyltransferase (aglS) of Haloferax volcanii (strain ATCC 29605 / DSM 3757 / JCM 8879 / NBRC 14742 / NCIMB 2012 / VKM B-1768 / DS2) (Halobacterium volcanii).